Reading from the N-terminus, the 70-residue chain is Large ribosomal subunit protein bL31 (70 aa).

Residues C16, C18, C37, and C40 each coordinate Zn(2+).

This sequence belongs to the bacterial ribosomal protein bL31 family. Type A subfamily. As to quaternary structure, part of the 50S ribosomal subunit. Requires Zn(2+) as cofactor.

Binds the 23S rRNA. The protein is Large ribosomal subunit protein bL31 of Shewanella baltica (strain OS223).